A 605-amino-acid polypeptide reads, in one-letter code: Acetoin dehydrogenase operon transcriptional activator AcoR (605 aa).

Residues 295 to 520 (VIGQSGRSQA…LFNVFERLSI (226 aa)) enclose the Sigma-54 factor interaction domain. ATP-binding positions include 323 to 330 (GETGTGKE) and 387 to 396 (ANQGTLFLDE). The H-T-H motif DNA-binding region spans 578-597 (VSQAAKISGIPRSTFYKRLK).

Acts as a transcriptional activator of the acoABCL operon encoding the acetoin dehydrogenase complex. The polypeptide is Acetoin dehydrogenase operon transcriptional activator AcoR (acoR) (Bacillus subtilis (strain 168)).